Reading from the N-terminus, the 318-residue chain is MTSAYDKLHSTLDVKAFGRVAVLYGGKSAEREVSLKSGAAVIEALTSAGVDVVAIDVGDDLLARLQNEKIDRAFIILHGRGGEDGSMQGLLECLGIPYTGSGILASALAMDKLRTKQVWQSLGIPTPRHAVLASEQDCVAASAELGFPLIVKPAHEGSSIGMAKVNSEQELVAAWKDAAKYDSQVLVEQWIHGPEFTIAVLRGQVLPPIALGTPHVFYDYDAKYIANDTQYRIPCGLDSVKEQELIDLTARACDAIGIEGWGRLDVMQDEQGRFWLLEVNTAPGMTDHSLVPMAARAAGLDFQQLVLAILADSVATRG.

Positions 116–311 (KQVWQSLGIP…FQQLVLAILA (196 aa)) constitute an ATP-grasp domain. 142–197 (SAELGFPLIVKPAHEGSSIGMAKVNSEQELVAAWKDAAKYDSQVLVEQWIHGPEFT) contributes to the ATP binding site. Asp-265, Glu-278, and Asn-280 together coordinate Mg(2+).

Belongs to the D-alanine--D-alanine ligase family. The cofactor is Mg(2+). It depends on Mn(2+) as a cofactor.

It localises to the cytoplasm. It catalyses the reaction 2 D-alanine + ATP = D-alanyl-D-alanine + ADP + phosphate + H(+). Its pathway is cell wall biogenesis; peptidoglycan biosynthesis. Cell wall formation. The sequence is that of D-alanine--D-alanine ligase from Pseudomonas entomophila (strain L48).